The chain runs to 342 residues: Prenyl transferase penC (342 aa).

The chain crosses the membrane as a helical span at residues 17–37 (LSYLTLTVGALALVVVLYISI). Histidine 110 is a binding site for isopentenyl diphosphate. The Mg(2+) site is built by aspartate 117 and aspartate 121. Arginine 126 contacts dimethylallyl diphosphate. The N-linked (GlcNAc...) asparagine glycan is linked to asparagine 154. Lysine 210 serves as a coordination point for dimethylallyl diphosphate.

It belongs to the FPP/GGPP synthase family.

The protein resides in the membrane. It participates in secondary metabolite biosynthesis. Its function is as follows. Prenyl transferase; part of the gene cluster that mediates the biosynthesis of the indole diterpenes penitrems. The geranylgeranyl diphosphate (GGPP) synthase penG catalyzes the first step in penitrem biosynthesis via conversion of farnesyl pyrophosphate and isopentyl pyrophosphate into geranylgeranyl pyrophosphate (GGPP). Condensation of indole-3-glycerol phosphate with GGPP by the prenyl transferase penC then forms 3-geranylgeranylindole (3-GGI). Epoxidation by the FAD-dependent monooxygenase penM leads to a epoxidized-GGI that is substrate of the terpene cyclase penB for cyclization to yield paspaline. Paspaline is subsequently converted to 13-desoxypaxilline by the cytochrome P450 monooxygenase penP, the latter being then converted to paxilline by the cytochrome P450 monooxygenase penQ. Paxilline is converted to beta-paxitriol via C-10 ketoreduction by the short-chain dehydrogenase PC-15 which can be monoprenylated at the C-20 by the indole diterpene prenyltransferase penD. A two-step elimination (acetylation and elimination) process performed by the O-acetyltransferase PC-16 and the P.simplicissimum ptmI-ortholog not yet identified in P.crustosum, leads to the production of the prenylated form of penijanthine. The FAD-linked oxidoreductase ptmO then converts the prenylated form of penijanthine into PC-M5 which is in turn transformed into PC-M4 by the aromatic dimethylallyltransferase PC-22. A series of oxidation steps involving 4 cytochrome P450 monooxygenases (PC-21, PC-05, PC-23, PC-20) and a FAD-dependent monooxygenase (PC-14) are required for the transformation of PC-M4 to penitrems A and E. Synthesis of these final products is proposed to proceed via penitrems D and C (PC-21, PC-05, PC-14) and penitrems B and F (PC-21, PC-05, PC-14, PC-23). The protein is Prenyl transferase penC of Penicillium crustosum (Blue mold fungus).